Consider the following 227-residue polypeptide: Extracellular deoxyribonuclease (227 aa).

Positions 1–20 are cleaved as a signal peptide; the sequence is MFRPLLSFTLARLVSLPLHA.

It belongs to the EndA/NucM nuclease family.

It localises to the secreted. This Aeromonas hydrophila protein is Extracellular deoxyribonuclease.